We begin with the raw amino-acid sequence, 87 residues long: Mitochondrial import inner membrane translocase subunit TIM8 (87 aa).

Residues 44–68 (CFKKCVESVNDSNLSSQEEQCLSNC) carry the Twin CX3C motif motif. 2 cysteine pairs are disulfide-bonded: cysteine 44/cysteine 68 and cysteine 48/cysteine 64.

Belongs to the small Tim family. Heterohexamer; composed of 3 copies of TIM8 and 3 copies of TIM13, named soluble 70 kDa complex. Associates with the TIM22 complex, whose core is composed of TIM18, TIM22 and TIM54. Interacts with the transmembrane regions of multi-pass transmembrane proteins in transit.

It localises to the mitochondrion inner membrane. Its subcellular location is the mitochondrion intermembrane space. Functionally, mitochondrial intermembrane chaperone that participates in the import and insertion of some multi-pass transmembrane proteins into the mitochondrial inner membrane. Also required for the transfer of beta-barrel precursors from the TOM complex to the sorting and assembly machinery (SAM complex) of the outer membrane. Acts as a chaperone-like protein that protects the hydrophobic precursors from aggregation and guide them through the mitochondrial intermembrane space. The TIM8-TIM13 complex is non essential and only mediates the import of few proteins under precise conditions, while the predominant TIM9-TIM10 70 kDa complex is crucial and mediates the import of much more proteins. Strictly required for import of TIM23 in some conditions, when a low membrane potential exists in the mitochondria. This chain is Mitochondrial import inner membrane translocase subunit TIM8 (TIM8), found in Saccharomyces cerevisiae (strain ATCC 204508 / S288c) (Baker's yeast).